A 494-amino-acid polypeptide reads, in one-letter code: MLNSRDQGNLHSGLCLWLCGFLALFKGSTGCESEEQLFHRLFAHYNRFIRPVENVSDPVTVHFELAITQLANVDEVNQIMETNLWLRHIWKDYRLRWDPTEYDGIETLRVPADNIWKPDIVLYNNAVGDFQVEGKTKALLKYDGVITWTPPAIFKSSCPMDITFFPFDHQNCSLKFGSWTYDKAEIDLLIIGSKVDMNDFWENSEWEIVDASGYKHDIKYNCCEEIYTDITYSFYIRRLPMFYTINLIIPCLFISFLTVLVFYLPSDCGEKVTLCISVLLSLTVFLLVITETIPSTSLVIPLVGEYLLFTMIFVTLSIVVTVFVLNIHYRTPATHTMPKWVKTIFLQAFPSILMMRKPLDKTKEAGGVKDPKSHTKRPAKVKFTHRGESKLLKECHHCQKSSDIAPGKRRSSQQPARWVAENSEHSSDVEDVIESVQFIAENMKSHNETNEVEDDWKYMAMVVDRVFLWVFIIVCVFGTVGLFLQPLLGNTGKS.

The signal sequence occupies residues 1-30 (MLNSRDQGNLHSGLCLWLCGFLALFKGSTG). The Extracellular portion of the chain corresponds to 31 to 240 (CESEEQLFHR…TYSFYIRRLP (210 aa)). Asn-54 and Asn-171 each carry an N-linked (GlcNAc...) asparagine glycan. Cystine bridges form between Cys-158/Cys-172 and Cys-222/Cys-223. A run of 3 helical transmembrane segments spans residues 241–265 (MFYTINLIIPCLFISFLTVLVFYLP), 272–290 (VTLCISVLLSLTVFLLVIT), and 306–327 (YLLFTMIFVTLSIVVTVFVLNI). The Cytoplasmic portion of the chain corresponds to 328–465 (HYRTPATHTM…WKYMAMVVDR (138 aa)). Residues 399 to 423 (QKSSDIAPGKRRSSQQPARWVAENS) form a disordered region. Position 401 is a phosphoserine (Ser-401). Residues 466-485 (VFLWVFIIVCVFGTVGLFLQ) traverse the membrane as a helical segment.

It belongs to the ligand-gated ion channel (TC 1.A.9) family. Acetylcholine receptor (TC 1.A.9.1) subfamily. Alpha-6/CHRNA6 sub-subfamily. In terms of assembly, neuronal AChR is composed of two different types of subunits: alpha and non-alpha (beta). CHRNA6/alpha-6 subunit can be combined to CHRNB2/beta-2 and CHRNA4/alpha-4 to give rise to functional receptors. Interacts with LYPD6. As to expression, predominantly expressed in only a few brain areas, including dopaminergic neurons, norepirephrine neurons and cells of the visual system.

It is found in the synaptic cell membrane. The catalysed reaction is K(+)(in) = K(+)(out). It carries out the reaction Na(+)(in) = Na(+)(out). It catalyses the reaction Ca(2+)(in) = Ca(2+)(out). With respect to regulation, activated by a myriad of ligands such as acetylcholine, cytisine and nicotine. CHRNA6 nAChR activity is inhibited by the antagonists alpha-conotoxin MII and PIA, a small disulfide-constrained peptides from cone snails. Functionally, component of neuronal acetylcholine receptors (nAChRs) that function as pentameric, ligand-gated cation channels with high calcium permeability among other activities. nAChRs are excitatory neurotrasnmitter receptors formed by a collection of nAChR subunits known to mediate synaptic transmission in the nervous system and the neuromuscular junction. Each nAchR subunit confers differential attributes to channel properties, including activation, deactivation and desensitization kinetics, pH sensitivity, cation permeability, and binding to allosteric modulators. CHRNA6 forms pentameric channels with CHRNB2 and CHRNA4 that exhibit high sensitivity to ACh and nicotine and are predominantly expressed in only a few brain areas, including dopaminergic neurons, norepirephrine neurons and cells of the visual system. nAChrs containing CHRNA6 subunits mediate endogenous cholinergic modulation of dopamine and gamma-aminobutyric acid (GABA) release in response to nicotine at nerve terminals. The sequence is that of Neuronal acetylcholine receptor subunit alpha-6 (Chrna6) from Mus musculus (Mouse).